Here is a 795-residue protein sequence, read N- to C-terminus: Phenylalanine--tRNA ligase beta subunit (795 aa).

The tRNA-binding domain maps to 39–148; the sequence is AGAFHGVVVG…ADAPIGTDIR (110 aa). In terms of domain architecture, B5 spans 401-476; that stretch reads PTRATITLRR…RIYGYNNIPN (76 aa). Residues D454, D460, E463, and E464 each coordinate Mg(2+). The FDX-ACB domain maps to 701 to 794; it reads SRFPANRRDI…LKQRFQASLR (94 aa).

The protein belongs to the phenylalanyl-tRNA synthetase beta subunit family. Type 1 subfamily. In terms of assembly, tetramer of two alpha and two beta subunits. Mg(2+) is required as a cofactor.

The protein resides in the cytoplasm. It catalyses the reaction tRNA(Phe) + L-phenylalanine + ATP = L-phenylalanyl-tRNA(Phe) + AMP + diphosphate + H(+). The protein is Phenylalanine--tRNA ligase beta subunit of Pectobacterium atrosepticum (strain SCRI 1043 / ATCC BAA-672) (Erwinia carotovora subsp. atroseptica).